Here is a 204-residue protein sequence, read N- to C-terminus: N-(5'-phosphoribosyl)anthranilate isomerase (204 aa).

The protein belongs to the TrpF family.

It carries out the reaction N-(5-phospho-beta-D-ribosyl)anthranilate = 1-(2-carboxyphenylamino)-1-deoxy-D-ribulose 5-phosphate. Its pathway is amino-acid biosynthesis; L-tryptophan biosynthesis; L-tryptophan from chorismate: step 3/5. This chain is N-(5'-phosphoribosyl)anthranilate isomerase, found in Oceanobacillus iheyensis (strain DSM 14371 / CIP 107618 / JCM 11309 / KCTC 3954 / HTE831).